A 192-amino-acid polypeptide reads, in one-letter code: 3-hydroxyanthranilate 3,4-dioxygenase (192 aa).

R50 contacts O2. Fe cation is bound by residues H54, E60, and H102. E60 lines the substrate pocket. 2 residues coordinate substrate: R106 and E116. A divalent metal cation contacts are provided by C131, C134, C168, and C171.

This sequence belongs to the 3-HAO family. The cofactor is Fe(2+).

The protein resides in the cytoplasm. It carries out the reaction 3-hydroxyanthranilate + O2 = (2Z,4Z)-2-amino-3-carboxymuconate 6-semialdehyde. Its pathway is cofactor biosynthesis; NAD(+) biosynthesis; quinolinate from L-kynurenine: step 3/3. Functionally, catalyzes the oxidative ring opening of 3-hydroxyanthranilate to 2-amino-3-carboxymuconate semialdehyde, which spontaneously cyclizes to quinolinate. In Coccidioides immitis (strain RS) (Valley fever fungus), this protein is 3-hydroxyanthranilate 3,4-dioxygenase.